A 536-amino-acid polypeptide reads, in one-letter code: CTP synthase (536 aa).

Residues 1 to 267 form an amidoligase domain region; it reads MTKFIFVTGG…DDIVIKRLQL (267 aa). Ser13 contributes to the CTP binding site. Residue Ser13 participates in UTP binding. 14 to 19 is a binding site for ATP; sequence SLGKGI. An L-glutamine-binding site is contributed by Tyr54. Asp71 lines the ATP pocket. Mg(2+)-binding residues include Asp71 and Glu141. Residues 148–150, 188–193, and Lys224 each bind CTP; these read DIE and KTKPTQ. Residues 188–193 and Lys224 each bind UTP; that span reads KTKPTQ. An ATP-binding site is contributed by 240–242; sequence RDA. Positions 293-535 constitute a Glutamine amidotransferase type-1 domain; sequence TIGLVGKYVS…IEASLKYQQN (243 aa). Gly355 lines the L-glutamine pocket. Cys382 functions as the Nucleophile; for glutamine hydrolysis in the catalytic mechanism. Residues 383 to 386, Glu406, and Arg463 contribute to the L-glutamine site; that span reads LGMQ. Residues His508 and Glu510 contribute to the active site.

This sequence belongs to the CTP synthase family. As to quaternary structure, homotetramer.

The enzyme catalyses UTP + L-glutamine + ATP + H2O = CTP + L-glutamate + ADP + phosphate + 2 H(+). It catalyses the reaction L-glutamine + H2O = L-glutamate + NH4(+). The catalysed reaction is UTP + NH4(+) + ATP = CTP + ADP + phosphate + 2 H(+). Its pathway is pyrimidine metabolism; CTP biosynthesis via de novo pathway; CTP from UDP: step 2/2. With respect to regulation, allosterically activated by GTP, when glutamine is the substrate; GTP has no effect on the reaction when ammonia is the substrate. The allosteric effector GTP functions by stabilizing the protein conformation that binds the tetrahedral intermediate(s) formed during glutamine hydrolysis. Inhibited by the product CTP, via allosteric rather than competitive inhibition. Functionally, catalyzes the ATP-dependent amination of UTP to CTP with either L-glutamine or ammonia as the source of nitrogen. Regulates intracellular CTP levels through interactions with the four ribonucleotide triphosphates. The sequence is that of CTP synthase from Staphylococcus aureus (strain NCTC 8325 / PS 47).